We begin with the raw amino-acid sequence, 331 residues long: 6-phosphogluconolactonase (331 aa).

Position 287 is an N6-acetyllysine (Lys-287).

It belongs to the cycloisomerase 2 family.

It catalyses the reaction 6-phospho-D-glucono-1,5-lactone + H2O = 6-phospho-D-gluconate + H(+). Its pathway is carbohydrate degradation; pentose phosphate pathway; D-ribulose 5-phosphate from D-glucose 6-phosphate (oxidative stage): step 2/3. Catalyzes the hydrolysis of 6-phosphogluconolactone to 6-phosphogluconate. This is 6-phosphogluconolactonase from Escherichia fergusonii (strain ATCC 35469 / DSM 13698 / CCUG 18766 / IAM 14443 / JCM 21226 / LMG 7866 / NBRC 102419 / NCTC 12128 / CDC 0568-73).